Reading from the N-terminus, the 400-residue chain is Queuine tRNA-ribosyltransferase (400 aa).

The active-site Proton acceptor is the Asp93. Substrate is bound by residues 93 to 97, Asp147, Gln190, and Gly217; that span reads DSGGF. Positions 248 to 254 are RNA binding; that stretch reads GVGSPED. The Nucleophile role is filled by Asp267. The segment at 272-276 is RNA binding; important for wobble base 34 recognition; it reads TRIAR. Cys305, Cys307, Cys310, and His336 together coordinate Zn(2+). The tract at residues 375–400 is disordered; that stretch reads RRERARAAGGAGHAPGPAEPLLPENR. Over residues 388–400 the composition is skewed to low complexity; the sequence is APGPAEPLLPENR.

It belongs to the queuine tRNA-ribosyltransferase family. Homodimer. Within each dimer, one monomer is responsible for RNA recognition and catalysis, while the other monomer binds to the replacement base PreQ1. It depends on Zn(2+) as a cofactor.

The catalysed reaction is 7-aminomethyl-7-carbaguanine + guanosine(34) in tRNA = 7-aminomethyl-7-carbaguanosine(34) in tRNA + guanine. Its pathway is tRNA modification; tRNA-queuosine biosynthesis. Its function is as follows. Catalyzes the base-exchange of a guanine (G) residue with the queuine precursor 7-aminomethyl-7-deazaguanine (PreQ1) at position 34 (anticodon wobble position) in tRNAs with GU(N) anticodons (tRNA-Asp, -Asn, -His and -Tyr). Catalysis occurs through a double-displacement mechanism. The nucleophile active site attacks the C1' of nucleotide 34 to detach the guanine base from the RNA, forming a covalent enzyme-RNA intermediate. The proton acceptor active site deprotonates the incoming PreQ1, allowing a nucleophilic attack on the C1' of the ribose to form the product. After dissociation, two additional enzymatic reactions on the tRNA convert PreQ1 to queuine (Q), resulting in the hypermodified nucleoside queuosine (7-(((4,5-cis-dihydroxy-2-cyclopenten-1-yl)amino)methyl)-7-deazaguanosine). In Symbiobacterium thermophilum (strain DSM 24528 / JCM 14929 / IAM 14863 / T), this protein is Queuine tRNA-ribosyltransferase.